Reading from the N-terminus, the 115-residue chain is Large ribosomal subunit protein bL19 (115 aa).

It belongs to the bacterial ribosomal protein bL19 family.

Its function is as follows. This protein is located at the 30S-50S ribosomal subunit interface and may play a role in the structure and function of the aminoacyl-tRNA binding site. The chain is Large ribosomal subunit protein bL19 (rplS) from Thermotoga maritima (strain ATCC 43589 / DSM 3109 / JCM 10099 / NBRC 100826 / MSB8).